Here is a 222-residue protein sequence, read N- to C-terminus: Superoxide dismutase [Mn], mitochondrial (222 aa).

The N-terminal 24 residues, 1–24 (MLSRAVCGTSRQLAPVLGYLGSRQ), are a transit peptide targeting the mitochondrion. Histidine 50 contributes to the Mn(2+) binding site. Residue tyrosine 58 is modified to 3'-nitrotyrosine. N6-acetyllysine; alternate is present on residues lysine 68 and lysine 75. N6-succinyllysine; alternate occurs at positions 68 and 75. Histidine 98 provides a ligand contact to Mn(2+). Position 114 is an N6-acetyllysine (lysine 114). Residues lysine 122 and lysine 130 each carry the N6-acetyllysine; alternate modification. An N6-succinyllysine; alternate mark is found at lysine 122 and lysine 130. Positions 183 and 187 each coordinate Mn(2+). Lysine 202 carries the N6-acetyllysine modification.

Belongs to the iron/manganese superoxide dismutase family. Homotetramer. Requires Mn(2+) as cofactor. In terms of processing, nitrated under oxidative stress. Nitration coupled with oxidation inhibits the catalytic activity. Acetylation at Lys-122 decreases enzymatic activity. Deacetylated by SIRT3 upon exposure to ionizing radiations or after long fasting. Post-translationally, polyubiquitinated; leading to proteasomal degradation. Deubiquitinated by USP36 which increases protein stability.

The protein localises to the mitochondrion matrix. The catalysed reaction is 2 superoxide + 2 H(+) = H2O2 + O2. Functionally, destroys superoxide anion radicals which are normally produced within the cells and which are toxic to biological systems. The polypeptide is Superoxide dismutase [Mn], mitochondrial (SOD2) (Homo sapiens (Human)).